The following is a 395-amino-acid chain: Altered inheritance of mitochondria protein 39, mitochondrial (395 aa).

Residues 156–176 form a helical membrane-spanning segment; that stretch reads QIWSAIFGGIFGVILGYSLIY.

It belongs to the AIM39 family.

The protein resides in the mitochondrion membrane. The protein is Altered inheritance of mitochondria protein 39, mitochondrial (AIM39) of Saccharomyces cerevisiae (strain JAY291) (Baker's yeast).